The following is a 545-amino-acid chain: T-complex protein 1 subunit alpha (545 aa).

Serine 2 bears the N-acetylserine mark.

The protein belongs to the TCP-1 chaperonin family. Heterooligomeric complex of about 850 to 900 kDa that forms two stacked rings, 12 to 16 nm in diameter.

Its subcellular location is the cytoplasm. In terms of biological role, molecular chaperone; assists the folding of proteins upon ATP hydrolysis. Known to play a role, in vitro, in the folding of actin and tubulin. This is T-complex protein 1 subunit alpha from Arabidopsis thaliana (Mouse-ear cress).